A 1486-amino-acid chain; its full sequence is Chromosome partition protein MukB (1486 aa).

An ATP-binding site is contributed by 34 to 41 (GGNGAGKS). 3 coiled-coil regions span residues 326-418 (LEAD…QYNQ), 444-480 (LETF…QAYQ), and 509-603 (RHLA…RAPV). The tract at residues 666-783 (PGGSEDQRLN…EVPLFGRAAR (118 aa)) is flexible hinge. Coiled coils occupy residues 835–923 (EAEI…AKLE), 977–1115 (EMLS…TAKA), and 1209–1265 (VEAI…LQSV).

The protein belongs to the SMC family. MukB subfamily. As to quaternary structure, homodimerization via its hinge domain. Binds to DNA via its C-terminal region. Interacts, and probably forms a ternary complex, with MukE and MukF via its C-terminal region. The complex formation is stimulated by calcium or magnesium. Interacts with tubulin-related protein FtsZ.

The protein resides in the cytoplasm. It localises to the nucleoid. Plays a central role in chromosome condensation, segregation and cell cycle progression. Functions as a homodimer, which is essential for chromosome partition. Involved in negative DNA supercoiling in vivo, and by this means organize and compact chromosomes. May achieve or facilitate chromosome segregation by condensation DNA from both sides of a centrally located replisome during cell division. The polypeptide is Chromosome partition protein MukB (Escherichia coli O7:K1 (strain IAI39 / ExPEC)).